The chain runs to 51 residues: MARNKPLAKKLRLAKAMKQNRRVPVWVIVKTNRRVLTHPKRRHWRRTKLKE.

Belongs to the eukaryotic ribosomal protein eL39 family.

The chain is Large ribosomal subunit protein eL39 (rpl39e) from Pyrococcus abyssi (strain GE5 / Orsay).